We begin with the raw amino-acid sequence, 200 residues long: Guanylate kinase (200 aa).

The Guanylate kinase-like domain occupies 6 to 184 (GLLIVLSGPS…AVDKLKSILL (179 aa)). 13–20 (GPSGAGKG) provides a ligand contact to ATP.

This sequence belongs to the guanylate kinase family.

It localises to the cytoplasm. It catalyses the reaction GMP + ATP = GDP + ADP. Essential for recycling GMP and indirectly, cGMP. This Desulfitobacterium hafniense (strain Y51) protein is Guanylate kinase.